The primary structure comprises 464 residues: Cystathionine beta-lyase, chloroplastic (464 aa).

A chloroplast-targeting transit peptide spans 1-55 (MTSSLSLHSSFVPSFADLSDRGLISKNSPTSVSISKVPTWEKKQISNRNSFKLNC). The pyridoxal 5'-phosphate site is built by tyrosine 127, arginine 129, glycine 157, methionine 158, serine 275, and threonine 277. At lysine 278 the chain carries N6-(pyridoxal phosphate)lysine.

The protein belongs to the trans-sulfuration enzymes family. As to quaternary structure, forms homodimers. May form homotetramers from two homodimers. The cofactor is pyridoxal 5'-phosphate.

The protein localises to the plastid. Its subcellular location is the chloroplast. The catalysed reaction is L,L-cystathionine + H2O = L-homocysteine + pyruvate + NH4(+). The enzyme catalyses an S-substituted L-cysteine + H2O = a thiol + pyruvate + NH4(+). Its pathway is amino-acid biosynthesis; L-methionine biosynthesis via de novo pathway; L-homocysteine from L-cystathionine: step 1/1. Catalyzes the penultimate step in the de novo biosynthesis of methionine. Its role in methionine metabolism may affect plant development in different organs, probably by modifying plant auxin transport. Its cysteine desulfhydrase activity may be involved in hydrogen sulfur production using L-cysteine as a substrate. The polypeptide is Cystathionine beta-lyase, chloroplastic (Arabidopsis thaliana (Mouse-ear cress)).